A 284-amino-acid polypeptide reads, in one-letter code: Putative xyloglucan endotransglucosylase/hydrolase protein 13 (284 aa).

The signal sequence occupies residues 1 to 24 (MAAFTTKQSLLLLSLLLLISLSAG). A GH16 domain is found at 25–214 (SFYDNFDITW…WTNAPFSASY (190 aa)). E100 (nucleophile) is an active-site residue. The Proton donor role is filled by E104. Xyloglucan is bound at residue E104. Residue N108 is glycosylated (N-linked (GlcNAc...) asparagine). Xyloglucan is bound by residues 117–119 (HTN), 127–129 (NRE), 193–194 (DW), and G198. 2 disulfide bridges follow: C223–C234 and C267–C281. R272 is a xyloglucan binding site.

Belongs to the glycosyl hydrolase 16 family. XTH group 2 subfamily. Contains at least one intrachain disulfide bond essential for its enzymatic activity.

The protein resides in the secreted. It localises to the cell wall. It is found in the extracellular space. Its subcellular location is the apoplast. The enzyme catalyses breaks a beta-(1-&gt;4) bond in the backbone of a xyloglucan and transfers the xyloglucanyl segment on to O-4 of the non-reducing terminal glucose residue of an acceptor, which can be a xyloglucan or an oligosaccharide of xyloglucan.. In terms of biological role, may catalyze xyloglucan endohydrolysis (XEH) and/or endotransglycosylation (XET). Cleaves and religates xyloglucan polymers, an essential constituent of the primary cell wall, and thereby participates in cell wall construction of growing tissues. The polypeptide is Putative xyloglucan endotransglucosylase/hydrolase protein 13 (XTH13) (Arabidopsis thaliana (Mouse-ear cress)).